The chain runs to 468 residues: Probable ubiquitin carboxyl-terminal hydrolase R319 (468 aa).

The USP domain maps to 42–462 (TGIMNLGNTC…NAYILFYIRS (421 aa)). The Nucleophile role is filled by cysteine 51. Residue histidine 420 is the Proton acceptor of the active site.

The protein belongs to the peptidase C19 family.

The catalysed reaction is Thiol-dependent hydrolysis of ester, thioester, amide, peptide and isopeptide bonds formed by the C-terminal Gly of ubiquitin (a 76-residue protein attached to proteins as an intracellular targeting signal).. In Acanthamoeba polyphaga (Amoeba), this protein is Probable ubiquitin carboxyl-terminal hydrolase R319.